The primary structure comprises 250 residues: Kv channel-interacting protein 4 (250 aa).

Residues 2-44 (NVRRVESISAQLEEASSTGGFLYTQNSTKRSIKERLMKLLPCS) form a KIS region. Phosphoserine is present on residues serine 17 and serine 56. Residues 61–117 (LEMATVRHRPEALELLEAQSKFTKKELQILYRGFKNECPSGVVNEDTFKEIYSQFFP) enclose the EF-hand 1; degenerate domain. EF-hand domains lie at 120–155 (DSTT…LLRG), 156–191 (TVQE…IYDM), and 204–239 (APRQ…DENI). The Ca(2+) site is built by aspartate 133, aspartate 135, asparagine 137, aspartate 144, aspartate 169, asparagine 171, aspartate 173, tyrosine 175, glutamate 180, aspartate 217, asparagine 219, aspartate 221, and glutamate 228. An interaction with KCND2 region spans residues 237-250 (ENIMRSMQLFENVI).

The protein belongs to the recoverin family. As to quaternary structure, component of heteromultimeric potassium channels. Identified in potassium channel complexes containing KCND1, KCND2, KCND3, KCNIP1, KCNIP2, KCNIP3, KCNIP4, DPP6 and DPP10. Interacts with KCND2. Interacts with KCND3. Interacts with the C-terminus of PSEN2 and probably PSEN1.

The protein resides in the cell membrane. The protein localises to the cytoplasm. Its subcellular location is the peroxisome. Its function is as follows. Regulatory subunit of Kv4/D (Shal)-type voltage-gated rapidly inactivating A-type potassium channels. Modulates KCND2 channel density, inactivation kinetics and rate of recovery from inactivation in a calcium-dependent and isoform-specific manner. Modulates KCND3/Kv4.3 currents. Isoform 4 does not increase KCND2 expression at the cell membrane. Isoform 4 retains KCND3 in the endoplasmic reticulum and negatively regulates its expression at the cell membrane. In Bos taurus (Bovine), this protein is Kv channel-interacting protein 4 (KCNIP4).